A 242-amino-acid polypeptide reads, in one-letter code: tRNA pseudouridine synthase A (242 aa).

The active-site Nucleophile is the D51. Y107 provides a ligand contact to substrate.

It belongs to the tRNA pseudouridine synthase TruA family. Homodimer.

It carries out the reaction uridine(38/39/40) in tRNA = pseudouridine(38/39/40) in tRNA. Functionally, formation of pseudouridine at positions 38, 39 and 40 in the anticodon stem and loop of transfer RNAs. The sequence is that of tRNA pseudouridine synthase A from Helicobacter acinonychis (strain Sheeba).